We begin with the raw amino-acid sequence, 553 residues long: Phenylalanine--tRNA ligase alpha subunit (553 aa).

Positions 400 and 479 each coordinate L-phenylalanine. Mg(2+) is bound at residue Glu-481.

The protein belongs to the class-II aminoacyl-tRNA synthetase family. Phe-tRNA synthetase alpha subunit type 2 subfamily. Tetramer of two alpha and two beta subunits. The cofactor is Mg(2+).

It is found in the cytoplasm. It catalyses the reaction tRNA(Phe) + L-phenylalanine + ATP = L-phenylalanyl-tRNA(Phe) + AMP + diphosphate + H(+). This chain is Phenylalanine--tRNA ligase alpha subunit, found in Treponema pallidum (strain Nichols).